The chain runs to 241 residues: Phosphoribosylformylglycinamidine synthase subunit PurQ (241 aa).

The Glutamine amidotransferase type-1 domain occupies 6–241 (NVGIVVFPGS…QSLLLASAFA (236 aa)). Cys-90 acts as the Nucleophile in catalysis. Residues His-207 and Glu-209 contribute to the active site.

Part of the FGAM synthase complex composed of 1 PurL, 1 PurQ and 2 PurS subunits.

Its subcellular location is the cytoplasm. It carries out the reaction N(2)-formyl-N(1)-(5-phospho-beta-D-ribosyl)glycinamide + L-glutamine + ATP + H2O = 2-formamido-N(1)-(5-O-phospho-beta-D-ribosyl)acetamidine + L-glutamate + ADP + phosphate + H(+). The enzyme catalyses L-glutamine + H2O = L-glutamate + NH4(+). The protein operates within purine metabolism; IMP biosynthesis via de novo pathway; 5-amino-1-(5-phospho-D-ribosyl)imidazole from N(2)-formyl-N(1)-(5-phospho-D-ribosyl)glycinamide: step 1/2. In terms of biological role, part of the phosphoribosylformylglycinamidine synthase complex involved in the purines biosynthetic pathway. Catalyzes the ATP-dependent conversion of formylglycinamide ribonucleotide (FGAR) and glutamine to yield formylglycinamidine ribonucleotide (FGAM) and glutamate. The FGAM synthase complex is composed of three subunits. PurQ produces an ammonia molecule by converting glutamine to glutamate. PurL transfers the ammonia molecule to FGAR to form FGAM in an ATP-dependent manner. PurS interacts with PurQ and PurL and is thought to assist in the transfer of the ammonia molecule from PurQ to PurL. In Thermosynechococcus vestitus (strain NIES-2133 / IAM M-273 / BP-1), this protein is Phosphoribosylformylglycinamidine synthase subunit PurQ.